The following is a 315-amino-acid chain: Ribonuclease HII (315 aa).

Residues 78–267 form the RNase H type-2 domain; the sequence is TLVAGVDEAG…VREALGLAPL (190 aa). A divalent metal cation contacts are provided by aspartate 84, glutamate 85, and aspartate 176. The disordered stretch occupies residues 273–292; that stretch reads APPPESAAEPGGEGAIAGIA. Over residues 278–292 the composition is skewed to low complexity; sequence SAAEPGGEGAIAGIA.

The protein belongs to the RNase HII family. Requires Mn(2+) as cofactor. Mg(2+) serves as cofactor.

It is found in the cytoplasm. It carries out the reaction Endonucleolytic cleavage to 5'-phosphomonoester.. Functionally, endonuclease that specifically degrades the RNA of RNA-DNA hybrids. The sequence is that of Ribonuclease HII from Anaeromyxobacter sp. (strain Fw109-5).